A 362-amino-acid chain; its full sequence is Probable cinnamyl alcohol dehydrogenase 8D (362 aa).

Zn(2+) is bound at residue Cys45. An NADP(+)-binding site is contributed by Thr47. Zn(2+)-binding residues include His67, Glu68, Cys98, Cys101, Cys104, Cys112, and Cys161. Residues Thr165, 186-191, 209-214, Thr249, Gly273, and 296-298 each bind NADP(+); these read GLGGLG, SSSPAK, and NGV.

The protein belongs to the zinc-containing alcohol dehydrogenase family. As to quaternary structure, homodimer. Zn(2+) is required as a cofactor.

It catalyses the reaction (E)-cinnamyl alcohol + NADP(+) = (E)-cinnamaldehyde + NADPH + H(+). It carries out the reaction (E)-coniferol + NADP(+) = (E)-coniferaldehyde + NADPH + H(+). The catalysed reaction is (E)-sinapyl alcohol + NADP(+) = (E)-sinapaldehyde + NADPH + H(+). The enzyme catalyses (E)-4-coumaroyl alcohol + NADP(+) = (E)-4-coumaraldehyde + NADPH + H(+). It catalyses the reaction (E)-caffeyl alcohol + NADP(+) = (E)-caffeyl aldehyde + NADPH + H(+). The protein operates within aromatic compound metabolism; phenylpropanoid biosynthesis. Functionally, involved in lignin biosynthesis. Catalyzes the final step specific for the production of lignin monomers. Catalyzes the NADPH-dependent reduction of coniferaldehyde, 5-hydroxyconiferaldehyde, sinapaldehyde, 4-coumaraldehyde and caffeyl aldehyde to their respective alcohols. The chain is Probable cinnamyl alcohol dehydrogenase 8D from Oryza sativa subsp. japonica (Rice).